The following is a 256-amino-acid chain: Adenosine 5'-phosphosulfate reductase (256 aa).

[4Fe-4S] cluster contacts are provided by cysteine 120, cysteine 121, cysteine 203, and cysteine 206. The active-site Nucleophile; cysteine thiosulfonate intermediate is cysteine 231.

It belongs to the PAPS reductase family. CysH subfamily. The cofactor is [4Fe-4S] cluster.

It is found in the cytoplasm. The enzyme catalyses [thioredoxin]-disulfide + sulfite + AMP + 2 H(+) = adenosine 5'-phosphosulfate + [thioredoxin]-dithiol. The protein operates within sulfur metabolism; hydrogen sulfide biosynthesis; sulfite from sulfate. Functionally, catalyzes the formation of sulfite from adenosine 5'-phosphosulfate (APS) using thioredoxin as an electron donor. The sequence is that of Adenosine 5'-phosphosulfate reductase from Allochromatium vinosum (strain ATCC 17899 / DSM 180 / NBRC 103801 / NCIMB 10441 / D) (Chromatium vinosum).